The following is a 529-amino-acid chain: Amino acid transporter heavy chain SLC3A2 (529 aa).

The disordered stretch occupies residues 1 to 20 (MSQDTEVDMKEVELNELEPE). Over 1–84 (MSQDTEVDMK…SPGWVRTRWA (84 aa)) the chain is Cytoplasmic. Position 2 is a phosphoserine (serine 2). At threonine 5 the chain carries Phosphothreonine. Positions 7–20 (VDMKEVELNELEPE) are enriched in basic and acidic residues. Lysine 49 participates in a covalent cross-link: Glycyl lysine isopeptide (Lys-Gly) (interchain with G-Cter in ubiquitin). The residue at position 65 (serine 65) is a Phosphoserine. Lysine 66 participates in a covalent cross-link: Glycyl lysine isopeptide (Lys-Gly) (interchain with G-Cter in SUMO2). The helical; Signal-anchor for type II membrane protein transmembrane segment at 85-105 (LLLLFWLGWIGMLAGAVVIIV) threads the bilayer. The Extracellular portion of the chain corresponds to 106-529 (RAPRCRELPV…GLLLHFPYVA (424 aa)). Residue asparagine 266 is glycosylated (N-linked (GlcNAc...) asparagine). Phosphoserine is present on residues serine 307 and serine 309. 2 N-linked (GlcNAc...) asparagine glycosylation sites follow: asparagine 325 and asparagine 405. Residue serine 426 is modified to Phosphoserine.

The protein belongs to the SLC3A transporter family. Disulfide-linked heterodimer with a non-glycosylated light chain (SLC7A5, SLC7A6, SLC7A7, SLC7A8, SLC7A10 or SLC7A11). Interacts with TLCD3A/CT120 and ICAM1. Constitutively and specifically associates with beta-1 integrins (alpha-2/beta-1, alpha-3/beta-1, alpha-5/beta-1 and alpha-6/beta-1), but minimally with alpha-4/beta-1. Interacts with LAPTM4B; recruits SLC3A2 and SLC7A5 to lysosomes to promote leucine uptake into these organelles and is required for mTORC1 activation. In terms of processing, phosphorylation on Ser-307 or Ser-309 and on Ser-426 by ecto-protein kinases favors heterotypic cell-cell interactions. N-glycosylated; N-glycosylation is crucial for trafficking and stability of SLC3A2 to the plasma membrane.

The protein localises to the apical cell membrane. It localises to the cell membrane. The protein resides in the cell junction. Its subcellular location is the lysosome membrane. It is found in the melanosome. The protein localises to the basolateral cell membrane. Its function is as follows. Acts as a chaperone that facilitates biogenesis and trafficking of functional transporters heterodimers to the plasma membrane. Forms heterodimer with SLC7 family transporters (SLC7A5, SLC7A6, SLC7A7, SLC7A8, SLC7A10 and SLC7A11), a group of amino-acid antiporters. Heterodimers function as amino acids exchangers, the specificity of the substrate depending on the SLC7A subunit. Heterodimers formed by SLC3A2/SLC7A6 or SLC3A2/SLC7A7 mediate the uptake of dibasic amino acids. Heterodimer SLC3A2/SLC7A11 functions as an antiporter by mediating the exchange of extracellular anionic L-cystine and intracellular L-glutamate across the cellular plasma membrane. SLC3A2/SLC7A10 translocates small neutral L- and D-amino acids across the plasma membrane. SLC3A2/SLC75 or SLC3A2/SLC7A8 translocates neutral amino acids with broad specificity, thyroid hormones and L-DOPA. SLC3A2 is essential for plasma membrane localization, stability, and the transport activity of SLC7A5 and SLC7A8. When associated with LAPTM4B, the heterodimer SLC7A5 is recruited to lysosomes to promote leucine uptake into these organelles, and thereby mediates mTORC1 activation. Modulates integrin-related signaling and is essential for integrin-dependent cell spreading, migration and tumor progression. The sequence is that of Amino acid transporter heavy chain SLC3A2 from Oryctolagus cuniculus (Rabbit).